The primary structure comprises 302 residues: Sulfate adenylyltransferase subunit 2 (302 aa).

A disordered region spans residues 280 to 302; the sequence is RQGRAIDHDQSGSMELKKRQGYF.

The protein belongs to the PAPS reductase family. CysD subfamily. As to quaternary structure, heterodimer composed of CysD, the smaller subunit, and CysN.

It carries out the reaction sulfate + ATP + H(+) = adenosine 5'-phosphosulfate + diphosphate. Its pathway is sulfur metabolism; hydrogen sulfide biosynthesis; sulfite from sulfate: step 1/3. With CysN forms the ATP sulfurylase (ATPS) that catalyzes the adenylation of sulfate producing adenosine 5'-phosphosulfate (APS) and diphosphate, the first enzymatic step in sulfur assimilation pathway. APS synthesis involves the formation of a high-energy phosphoric-sulfuric acid anhydride bond driven by GTP hydrolysis by CysN coupled to ATP hydrolysis by CysD. In Vibrio cholerae serotype O1 (strain ATCC 39315 / El Tor Inaba N16961), this protein is Sulfate adenylyltransferase subunit 2.